The sequence spans 331 residues: Bifunctional nuclease (331 aa).

Positions 126 to 261 (CVQNNPRVLR…RIAYNNGLKV (136 aa)) constitute a BFN domain. Residues 291–326 (EAQEFDLVRNMLVAAVEERYKDAAQYRDQLFMFRAK) form the UVR domain.

This sequence belongs to the bifunctional nuclease family.

It is found in the nucleus. Bifunctional nuclease with both RNase and DNase activities. Involved in basal defense response. Participates in abscisic acid-derived callose deposition following infection by a necrotrophic pathogen. This Oryza minuta protein is Bifunctional nuclease (BBD).